Reading from the N-terminus, the 583-residue chain is Complement factor I (583 aa).

A signal peptide spans methionine 1–cysteine 18. Cystine bridges form between cysteine 33–cysteine 255, cysteine 43–cysteine 54, cysteine 48–cysteine 59, cysteine 61–cysteine 93, cysteine 67–cysteine 86, cysteine 75–cysteine 106, cysteine 141–cysteine 181, cysteine 154–cysteine 214, cysteine 186–cysteine 196, cysteine 229–cysteine 247, cysteine 241–cysteine 256, cysteine 259–cysteine 271, cysteine 266–cysteine 284, cysteine 278–cysteine 293, cysteine 327–cysteine 453, cysteine 365–cysteine 381, and cysteine 373–cysteine 444. A Kazal-like domain is found at isoleucine 55–alanine 108. Residue asparagine 70 is glycosylated (N-linked (GlcNAc...) asparagine). Asparagine 103 carries N-linked (GlcNAc...) (complex) asparagine glycosylation. Positions valine 114–valine 212 constitute an SRCR domain. Residue asparagine 177 is glycosylated (N-linked (GlcNAc...) asparagine). 2 consecutive LDL-receptor class A domains span residues valine 213–lysine 257 and alanine 258–alanine 294. Residues lysine 239, aspartate 242, isoleucine 244, aspartate 246, aspartate 252, and glutamate 253 each contribute to the Ca(2+) site. Ca(2+) is bound by residues tyrosine 276, asparagine 279, glutamate 281, aspartate 283, aspartate 289, and glutamate 290. The Peptidase S1 domain maps to isoleucine 340–glycine 574. Active-site charge relay system residues include histidine 380 and aspartate 429. 2 N-linked (GlcNAc...) asparagine glycosylation sites follow: asparagine 464 and asparagine 494. Intrachain disulfides connect cysteine 467-cysteine 531, cysteine 495-cysteine 510, and cysteine 521-cysteine 550. Serine 525 acts as the Charge relay system in catalysis. Asparagine 536 is a glycosylation site (N-linked (GlcNAc...) asparagine).

The protein belongs to the peptidase S1 family. Heterodimer of a light and heavy chains; disulfide-linked. The fully processed and mature protein circulates as a zymogen, and is allosterically activated by substrate-induced remodeling of the active site. Interacts with C3b. Interacts with complement factor H. As to quaternary structure, (Microbial infection) Interacts with Staphylococcus aureus clumping factor A/ClfA; this interaction enhances cleavage of C3b into iC3b by CFI. In terms of tissue distribution, expressed in the liver by hepatocytes. Also present in other cells such as monocytes, fibroblasts or keratinocytes.

The protein localises to the secreted. It localises to the extracellular space. It catalyses the reaction Inactivates complement subcomponents C3b, iC3b and C4b by proteolytic cleavage.. Its function is as follows. Trypsin-like serine protease that plays an essential role in regulating the immune response by controlling all complement pathways. Inhibits these pathways by cleaving three peptide bonds in the alpha-chain of C3b and two bonds in the alpha-chain of C4b thereby inactivating these proteins. Essential cofactors for these reactions include factor H and C4BP in the fluid phase and membrane cofactor protein/CD46 and CR1 on cell surfaces. The presence of these cofactors on healthy cells allows degradation of deposited C3b by CFI in order to prevent undesired complement activation, while in apoptotic cells or microbes, the absence of such cofactors leads to C3b-mediated complement activation and subsequent opsonization. This chain is Complement factor I (CFI), found in Homo sapiens (Human).